Here is a 341-residue protein sequence, read N- to C-terminus: MKVKDFDFYLPEELIAQHPMEKRDEARLLVLDKETGEIEHKIFKDILDYLTPNDCLVLNNTRVLPARLIGSKEETGGKMEFLLLKRKEKDVWETLVKPGKRAQIGARFIFGNGELEAEVIGMGEEGSRIVKFYYEGIFEEILDQLGQMPLPPYIKEKLDDKEMYQTVYSKEEGSAAAPTAGLHFTEELLKKIEEKGVKLAFLTLHVGLGTFRPVKVEDIQEHVMHSEYYKMDKKTAEIINDTKENGGRVIAVGTTSCRTLETIGDIEGKVGEQSGWTDIFIYPGYKYKVVDALITNFHLPQSTLLMLVSALAGRDNIMNAYNVAVEKEYRFFSFGDAMFIK.

Belongs to the QueA family. In terms of assembly, monomer.

The protein resides in the cytoplasm. The enzyme catalyses 7-aminomethyl-7-carbaguanosine(34) in tRNA + S-adenosyl-L-methionine = epoxyqueuosine(34) in tRNA + adenine + L-methionine + 2 H(+). The protein operates within tRNA modification; tRNA-queuosine biosynthesis. Functionally, transfers and isomerizes the ribose moiety from AdoMet to the 7-aminomethyl group of 7-deazaguanine (preQ1-tRNA) to give epoxyqueuosine (oQ-tRNA). The polypeptide is S-adenosylmethionine:tRNA ribosyltransferase-isomerase (Clostridium botulinum (strain Langeland / NCTC 10281 / Type F)).